The following is a 176-amino-acid chain: MDLPGLIHDFLLVFLGLGLILGGLGVVLLANPIYSAFSLGLVFVCISLFYILSNSHFVAAAQLLIYVGAINVLIIFAVMFINGSEYSKDFHLWTVGDGVTSVVCTSLFVSLITTIPDTSWYGIIWTTKANQIIEQDLISNSQQIGIHLSTDFFIPFEFISIILLVALIGAIAVARQ.

Helical transmembrane passes span 10-30 (FLLV…VLLA), 32-52 (PIYS…FYIL), 61-81 (AQLL…VMFI), 92-112 (LWTV…VSLI), and 152-172 (FFIP…GAIA).

This sequence belongs to the complex I subunit 6 family. In terms of assembly, NDH is composed of at least 16 different subunits, 5 of which are encoded in the nucleus.

The protein resides in the plastid. It is found in the chloroplast thylakoid membrane. It catalyses the reaction a plastoquinone + NADH + (n+1) H(+)(in) = a plastoquinol + NAD(+) + n H(+)(out). It carries out the reaction a plastoquinone + NADPH + (n+1) H(+)(in) = a plastoquinol + NADP(+) + n H(+)(out). Its function is as follows. NDH shuttles electrons from NAD(P)H:plastoquinone, via FMN and iron-sulfur (Fe-S) centers, to quinones in the photosynthetic chain and possibly in a chloroplast respiratory chain. The immediate electron acceptor for the enzyme in this species is believed to be plastoquinone. Couples the redox reaction to proton translocation, and thus conserves the redox energy in a proton gradient. The sequence is that of NAD(P)H-quinone oxidoreductase subunit 6, chloroplastic (ndhG) from Helianthus annuus (Common sunflower).